The primary structure comprises 906 residues: Protein translocase subunit SecA (906 aa).

Residues Gln-87, 105-109 (GEGKT), and Asp-507 each bind ATP. 4 residues coordinate Zn(2+): Cys-890, Cys-892, Cys-901, and His-902.

Belongs to the SecA family. As to quaternary structure, monomer and homodimer. Part of the essential Sec protein translocation apparatus which comprises SecA, SecYEG and auxiliary proteins SecDF-YajC and YidC. Zn(2+) is required as a cofactor.

It localises to the cell inner membrane. The protein resides in the cytoplasm. It carries out the reaction ATP + H2O + cellular proteinSide 1 = ADP + phosphate + cellular proteinSide 2.. Part of the Sec protein translocase complex. Interacts with the SecYEG preprotein conducting channel. Has a central role in coupling the hydrolysis of ATP to the transfer of proteins into and across the cell membrane, serving both as a receptor for the preprotein-SecB complex and as an ATP-driven molecular motor driving the stepwise translocation of polypeptide chains across the membrane. This chain is Protein translocase subunit SecA, found in Laribacter hongkongensis (strain HLHK9).